The primary structure comprises 171 residues: 16S rRNA aminocarboxypropyltransferase (171 aa).

The S-adenosyl-L-methionine site is built by threonine 18, leucine 68, leucine 91, and serine 110.

This sequence belongs to the TDD superfamily. TSR3 family.

The protein resides in the cytoplasm. It catalyses the reaction an N(1)-methylpseudouridine in rRNA + S-adenosyl-L-methionine = N(1)-methyl-N(3)-[(3S)-3-amino-3-carboxypropyl]pseudouridine in rRNA + S-methyl-5'-thioadenosine + H(+). In terms of biological role, aminocarboxypropyltransferase that catalyzes the aminocarboxypropyl transfer on pseudouridine corresponding to position 914 in M.jannaschii 16S rRNA. It constitutes the last step in biosynthesis of the hypermodified N1-methyl-N3-(3-amino-3-carboxypropyl) pseudouridine (m1acp3-Psi). This Methanosphaera stadtmanae (strain ATCC 43021 / DSM 3091 / JCM 11832 / MCB-3) protein is 16S rRNA aminocarboxypropyltransferase.